The sequence spans 584 residues: MADRDDERHAERDRDELVAQVSYLEKELSVLRRKLADSPRHVRLLEDRLQEAQTALAAANAKNERLVSALKEARDQIVALKEEVDRLSQPPSGFGVFLRARDDGTVEIFTNGRKMRVNVSPSVNVDELRPGQEVMLNEAFNVVEASSYETVGEVVMLKEILEDGERVLVISNHDEERIVRIAEPLRDEPLRAGDSLLLEPRSGYVYERIPKAEVEELILEEVPDISYSDIGGLNGQIEMIRDAVELPYLHKELFREHKLRPPKGVLLYGPPGCGKTLIAKAVANSLAKQVAEKTGRDVGKSFFLNIKGPELLNKYVGETERHIRLVFQRAREKASEGTPVIVFFDEMDSIFRTRGSGVSSDVENTIVPQLLSEIDGVEGLENVIVIGASNREDMIDPAILRPGRLDVKIKIERPDAEAARDIFSKYITPDLPLHPDDLAEHGGSPTATVNAMIQRVVERMYAETEENRFLEVTYANGDKEVLYFKDFNSGAMIQNIVDRAKKMAIKDYLENGSKGLRVSHLLQACVDEFSENEDLPNTTNPDDWARISGKKGERIVYIRTLVSGKKGADAGRSIDTVANTGQYL.

A coiled-coil region spans residues 8-90; it reads RHAERDRDEL…KEEVDRLSQP (83 aa). 272 to 277 is an ATP binding site; that stretch reads GCGKTL. Residues 583-584 are docks into pockets in the proteasome alpha-ring; the sequence is YL.

Belongs to the AAA ATPase family. As to quaternary structure, homohexamer. Assembles into a hexameric ring structure that caps the 20S proteasome core. Strongly interacts with the prokaryotic ubiquitin-like protein Pup through a hydrophobic interface; the interacting region of ARC lies in its N-terminal coiled-coil domain. There is one Pup binding site per ARC hexamer ring. Upon ATP-binding, the C-terminus of ARC interacts with the alpha-rings of the proteasome core, possibly by binding to the intersubunit pockets.

It functions in the pathway protein degradation; proteasomal Pup-dependent pathway. ATPase which is responsible for recognizing, binding, unfolding and translocation of pupylated proteins into the bacterial 20S proteasome core particle. May be essential for opening the gate of the 20S proteasome via an interaction with its C-terminus, thereby allowing substrate entry and access to the site of proteolysis. Thus, the C-termini of the proteasomal ATPase may function like a 'key in a lock' to induce gate opening and therefore regulate proteolysis. The polypeptide is Proteasome-associated ATPase (Thermobifida fusca (strain YX)).